The sequence spans 179 residues: Large ribosomal subunit protein uL6 (179 aa).

It belongs to the universal ribosomal protein uL6 family. As to quaternary structure, part of the 50S ribosomal subunit.

In terms of biological role, this protein binds to the 23S rRNA, and is important in its secondary structure. It is located near the subunit interface in the base of the L7/L12 stalk, and near the tRNA binding site of the peptidyltransferase center. This chain is Large ribosomal subunit protein uL6, found in Syntrophus aciditrophicus (strain SB).